The chain runs to 314 residues: Formate-nitrite transporter (314 aa).

Residues 1-47 (MSKGKSKYVIDPISVKTACTSEESYIRCVEYGKGKAHYPNLSLLAKA) are Cytoplasmic-facing. Residues 48 to 68 (ILAGVFVGVCAHASGIAGGHF) form a helical membrane-spanning segment. Residues 69–78 (YYHKLREYVG) are Extracellular-facing. The chain crosses the membrane as a helical span at residues 79 to 99 (ISMSAFVYGFTFPIAFLCIIA). At 100-128 (TGSDLFTGNTLAVTTALLQRKVSLLQYLR) the chain is on the cytoplasmic side. Residues 129-149 (VMSISLFGNYLGAVSFAFFVS) form a helical membrane-spanning segment. The Extracellular portion of the chain corresponds to 150-185 (HLSGAYEKHTDVTKNHIFQFLNDIAEKKISHTFIQC). A helical membrane pass occupies residues 186 to 206 (ICLAIGCNIFVCLAVYFVLTI). Topologically, residues 207 to 211 (KDGSG) are cytoplasmic. The helical transmembrane segment at 212–232 (MVFSVFFAVYAFAIAGYEHII) threads the bilayer. Residues 233-257 (ANMYTLNLALMVEAKVTWSKVYFHN) are Extracellular-facing. The chain crosses the membrane as a helical span at residues 258–278 (LLPTLIGNYIAGALVLACPLF). The Cytoplasmic portion of the chain corresponds to 279–314 (YIYRNSYRDYERTRGDGSNCGLRSLSIEMQNGSNGN).

It belongs to the FNT transporter (TC 1.A.16) family. In terms of assembly, homopentamer.

It is found in the cell membrane. The protein resides in the vacuole membrane. The catalysed reaction is (S)-lactate(in) + H(+)(in) = (S)-lactate(out) + H(+)(out). The enzyme catalyses formate(in) + H(+)(in) = formate(out) + H(+)(out). It catalyses the reaction pyruvate(out) + H(+)(out) = pyruvate(in) + H(+)(in). It carries out the reaction acetate(out) + H(+)(out) = acetate(in) + H(+)(in). Its activity is regulated as follows. Inhibited by the Malaria Box compound MMV007839 and its derivatives BH296 and BH267.meta. Its function is as follows. Monocarboxylate-proton symporter that mediates the efflux of the waste product lactate in the intraerythrocytic parasites; active in acidic-to-neutral pH range. Transports L-lactate. This is Formate-nitrite transporter from Plasmodium knowlesi (strain H).